The primary structure comprises 112 residues: Transmembrane protein 14C (112 aa).

4 consecutive transmembrane segments (helical) span residues 7-27 (VVPL…GGII), 32-52 (AGSV…GLGA), 62-82 (VWVF…RFYH), and 88-108 (PAGL…VSMF).

This sequence belongs to the TMEM14 family.

It is found in the mitochondrion membrane. Required for normal heme biosynthesis. The chain is Transmembrane protein 14C (TMEM14C) from Homo sapiens (Human).